The sequence spans 355 residues: F-box only protein 32 (355 aa).

Positions 62-67 (KKRKKD) match the Nuclear localization signal motif. The Nuclear export signal motif lies at 169 to 173 (LLQTL). In terms of domain architecture, F-box spans 223–271 (LTFTDLPLCLQLNIMQRLSDGRDLVSLGQVAPDLHVLSEDRLLWKKLCQ). The short motif at 280 to 295 (RKRLILSDKGQLDWKK) is the Bipartite nuclear localization signal element.

As to quaternary structure, part of the SCF (SKP1-CUL1-F-box) E3 ubiquitin-protein ligase complex SCF(FBXO32) formed of CUL1, SKP1, RBX1 and FBXO32.

The protein localises to the cytoplasm. Its subcellular location is the nucleus. It participates in protein modification; protein ubiquitination. In terms of biological role, substrate recognition component of a SCF (SKP1-CUL1-F-box protein) E3 ubiquitin-protein ligase complex which mediates the ubiquitination and subsequent proteasomal degradation of target proteins. Probably recognizes and binds to phosphorylated target proteins during skeletal muscle atrophy. Recognizes TERF1. The polypeptide is F-box only protein 32 (FBXO32) (Bos taurus (Bovine)).